A 238-amino-acid chain; its full sequence is uncharacterized protein (238 aa).

The HTH gntR-type domain occupies 1 to 68 (MIYKSIAERL…HGSGTYLVRK (68 aa)). A DNA-binding region (H-T-H motif) is located at residues 28 to 47 (EKKLAEEFAVSRMTIRKAID).

This is an uncharacterized protein from Escherichia coli (strain K12).